We begin with the raw amino-acid sequence, 547 residues long: Chaperonin GroEL (547 aa).

ATP contacts are provided by residues 30 to 33, Lys51, 87 to 91, Gly415, and Asp495; these read TLGP and DGTTT.

The protein belongs to the chaperonin (HSP60) family. As to quaternary structure, forms a cylinder of 14 subunits composed of two heptameric rings stacked back-to-back. Interacts with the co-chaperonin GroES.

It localises to the cytoplasm. The enzyme catalyses ATP + H2O + a folded polypeptide = ADP + phosphate + an unfolded polypeptide.. Functionally, together with its co-chaperonin GroES, plays an essential role in assisting protein folding. The GroEL-GroES system forms a nano-cage that allows encapsulation of the non-native substrate proteins and provides a physical environment optimized to promote and accelerate protein folding. This is Chaperonin GroEL from Bartonella quintana (strain Toulouse) (Rochalimaea quintana).